The chain runs to 214 residues: Large ribosomal subunit protein bL25 (214 aa).

Residues 189–214 (IHASRKAKADEDEAAEGEEGEEGAED) form a disordered region. Residues 198–214 (DEDEAAEGEEGEEGAED) show a composition bias toward acidic residues.

This sequence belongs to the bacterial ribosomal protein bL25 family. CTC subfamily. In terms of assembly, part of the 50S ribosomal subunit; part of the 5S rRNA/L5/L18/L25 subcomplex. Contacts the 5S rRNA. Binds to the 5S rRNA independently of L5 and L18.

In terms of biological role, this is one of the proteins that binds to the 5S RNA in the ribosome where it forms part of the central protuberance. The protein is Large ribosomal subunit protein bL25 of Alkalilimnicola ehrlichii (strain ATCC BAA-1101 / DSM 17681 / MLHE-1).